The primary structure comprises 319 residues: 4-hydroxy-3-methylbut-2-enyl diphosphate reductase (319 aa).

C12 is a [4Fe-4S] cluster binding site. (2E)-4-hydroxy-3-methylbut-2-enyl diphosphate contacts are provided by H41 and H74. Residues H41 and H74 each coordinate dimethylallyl diphosphate. Isopentenyl diphosphate contacts are provided by H41 and H74. C97 is a [4Fe-4S] cluster binding site. Residue H125 participates in (2E)-4-hydroxy-3-methylbut-2-enyl diphosphate binding. A dimethylallyl diphosphate-binding site is contributed by H125. Isopentenyl diphosphate is bound at residue H125. Catalysis depends on E127, which acts as the Proton donor. (2E)-4-hydroxy-3-methylbut-2-enyl diphosphate is bound at residue T168. Residue C198 coordinates [4Fe-4S] cluster. (2E)-4-hydroxy-3-methylbut-2-enyl diphosphate is bound by residues S226, S227, N228, and S270. Positions 226, 227, 228, and 270 each coordinate dimethylallyl diphosphate. Isopentenyl diphosphate is bound by residues S226, S227, N228, and S270.

Belongs to the IspH family. As to quaternary structure, homodimer. Requires [4Fe-4S] cluster as cofactor.

It catalyses the reaction isopentenyl diphosphate + 2 oxidized [2Fe-2S]-[ferredoxin] + H2O = (2E)-4-hydroxy-3-methylbut-2-enyl diphosphate + 2 reduced [2Fe-2S]-[ferredoxin] + 2 H(+). The enzyme catalyses dimethylallyl diphosphate + 2 oxidized [2Fe-2S]-[ferredoxin] + H2O = (2E)-4-hydroxy-3-methylbut-2-enyl diphosphate + 2 reduced [2Fe-2S]-[ferredoxin] + 2 H(+). It participates in isoprenoid biosynthesis; dimethylallyl diphosphate biosynthesis; dimethylallyl diphosphate from (2E)-4-hydroxy-3-methylbutenyl diphosphate: step 1/1. It functions in the pathway isoprenoid biosynthesis; isopentenyl diphosphate biosynthesis via DXP pathway; isopentenyl diphosphate from 1-deoxy-D-xylulose 5-phosphate: step 6/6. Catalyzes the conversion of 1-hydroxy-2-methyl-2-(E)-butenyl 4-diphosphate (HMBPP) into a mixture of isopentenyl diphosphate (IPP) and dimethylallyl diphosphate (DMAPP). Acts in the terminal step of the DOXP/MEP pathway for isoprenoid precursor biosynthesis. This is 4-hydroxy-3-methylbut-2-enyl diphosphate reductase from Hamiltonella defensa subsp. Acyrthosiphon pisum (strain 5AT).